The following is a 260-amino-acid chain: Ribosomal RNA small subunit methyltransferase G (260 aa).

S-adenosyl-L-methionine-binding positions include Gly94, Phe99, 117 to 119, 145 to 146, and Arg164; these read DST and AE. Residues 236-260 are disordered; that stretch reads APTPPPYPRSPGTPKRQPLGQSNRP. Residues 237–246 are compositionally biased toward pro residues; the sequence is PTPPPYPRSP.

This sequence belongs to the methyltransferase superfamily. RNA methyltransferase RsmG family.

It localises to the cytoplasm. In terms of biological role, specifically methylates the N7 position of a guanine in 16S rRNA. This chain is Ribosomal RNA small subunit methyltransferase G, found in Synechococcus sp. (strain JA-2-3B'a(2-13)) (Cyanobacteria bacterium Yellowstone B-Prime).